We begin with the raw amino-acid sequence, 154 residues long: 6,7-dimethyl-8-ribityllumazine synthase (154 aa).

Residues phenylalanine 22, 56-58 (AFE), and 80-82 (TVI) contribute to the 5-amino-6-(D-ribitylamino)uracil site. 85 to 86 (AT) is a (2S)-2-hydroxy-3-oxobutyl phosphate binding site. Histidine 88 (proton donor) is an active-site residue. Phenylalanine 113 contributes to the 5-amino-6-(D-ribitylamino)uracil binding site. Arginine 127 lines the (2S)-2-hydroxy-3-oxobutyl phosphate pocket.

Belongs to the DMRL synthase family. Forms an icosahedral capsid composed of 60 subunits, arranged as a dodecamer of pentamers.

It carries out the reaction (2S)-2-hydroxy-3-oxobutyl phosphate + 5-amino-6-(D-ribitylamino)uracil = 6,7-dimethyl-8-(1-D-ribityl)lumazine + phosphate + 2 H2O + H(+). It functions in the pathway cofactor biosynthesis; riboflavin biosynthesis; riboflavin from 2-hydroxy-3-oxobutyl phosphate and 5-amino-6-(D-ribitylamino)uracil: step 1/2. In terms of biological role, catalyzes the formation of 6,7-dimethyl-8-ribityllumazine by condensation of 5-amino-6-(D-ribitylamino)uracil with 3,4-dihydroxy-2-butanone 4-phosphate. This is the penultimate step in the biosynthesis of riboflavin. The chain is 6,7-dimethyl-8-ribityllumazine synthase from Bacillus pumilus (strain SAFR-032).